We begin with the raw amino-acid sequence, 420 residues long: MTLLALGINHKTAPVSLRERVTFSPESIEQALTSLLQQPLVQGGVVLSTCNRTELYLSVEQQEHIHEQLVSWLCEYHHLRPEEVSKSLYWHHGNEAVSHLMRVASGLDSLVLGEPQILGQVKKAFAESQRGQSLSGELERLFQKSFSVAKRVRTETEIGASAVSVAFAACTLARQIFESLAELNVLLVGAGETIELVARHLREHKVRHMIIANRTRERAQLLADEVGAEVITLPEIDERLADADIIISSTASPLPIIGKGMVERALKARRNQPMLLVDIAVPRDIEPEVGKLANAYLYSVDDLHAIIQSNLAQRKAAAVQAESIVQQESINFMAWLRSQGAVETIRDYRSQADQIRAEMEAKALAAIAQGADVEQVIHELAHRLTNRLIHAPTKSLQQAAGDGDVERLQLLRDSLGLDQH.

Substrate-binding positions include 49–52, S109, 114–116, and Q120; these read TCNR and EPQ. The active-site Nucleophile is the C50. 189 to 194 contributes to the NADP(+) binding site; sequence GAGETI.

This sequence belongs to the glutamyl-tRNA reductase family. As to quaternary structure, homodimer.

The enzyme catalyses (S)-4-amino-5-oxopentanoate + tRNA(Glu) + NADP(+) = L-glutamyl-tRNA(Glu) + NADPH + H(+). It participates in porphyrin-containing compound metabolism; protoporphyrin-IX biosynthesis; 5-aminolevulinate from L-glutamyl-tRNA(Glu): step 1/2. Catalyzes the NADPH-dependent reduction of glutamyl-tRNA(Glu) to glutamate 1-semialdehyde (GSA). This Serratia proteamaculans (strain 568) protein is Glutamyl-tRNA reductase.